The chain runs to 506 residues: Squalene monooxygenase 1,1 (506 aa).

2 helical membrane-spanning segments follow: residues 3 to 23 and 47 to 67; these read LAFP…WTVF and DADV…YALA. Residues 57-58, 77-78, R85, F90, R157, V173, D336, and M349 each bind FAD; these read VG and ER. Residues 447–467 form a helical membrane-spanning segment; it reads LIFHLCGITLSSIGQLLSPFP.

The protein belongs to the squalene monooxygenase family. FAD is required as a cofactor.

The protein localises to the membrane. The enzyme catalyses squalene + reduced [NADPH--hemoprotein reductase] + O2 = (S)-2,3-epoxysqualene + oxidized [NADPH--hemoprotein reductase] + H2O + H(+). The protein operates within terpene metabolism; lanosterol biosynthesis; lanosterol from farnesyl diphosphate: step 2/3. Catalyzes the stereospecific oxidation of squalene to (S)-2,3-epoxysqualene, and is considered to be a rate-limiting enzyme in steroid biosynthesis. The protein is Squalene monooxygenase 1,1 (SQP1,1) of Brassica napus (Rape).